We begin with the raw amino-acid sequence, 132 residues long: Glycine cleavage system H protein (132 aa).

The region spanning 24–106 (RVRVGITDYA…YGAGWLFELE (83 aa)) is the Lipoyl-binding domain. At lysine 65 the chain carries N6-lipoyllysine.

Belongs to the GcvH family. In terms of assembly, the glycine cleavage system is composed of four proteins: P, T, L and H. (R)-lipoate is required as a cofactor.

Functionally, the glycine cleavage system catalyzes the degradation of glycine. The H protein shuttles the methylamine group of glycine from the P protein to the T protein. This is Glycine cleavage system H protein from Nocardia farcinica (strain IFM 10152).